The following is a 1706-amino-acid chain: PR domain zinc finger protein 2 (1706 aa).

The SET domain maps to 27-140 (EEVRLFPSAV…PGEELLVWYN (114 aa)). The tract at residues 154 to 342 (ERASARSKRS…TPPPHTPRAR (189 aa)) is disordered. Residues 158–183 (ARSKRSSPKSRRGKKKSHENKNKGIR) show a composition bias toward basic residues. Positions 185 to 199 (HPTQLKASELDSTFA) are enriched in polar residues. A compositionally biased stretch (acidic residues) spans 258-294 (TDCEVNDVEEEELEEEEELEEEEEEELGEDGVEEADM). Positions 299–313 (SAKEPEIRCEEKPED) are enriched in basic and acidic residues. 2 consecutive C2H2-type zinc fingers follow at residues 355–377 (FPCQ…MHIH) and 385–407 (FKCK…ERRH). Disordered regions lie at residues 400-446 (RRRH…QLGQ), 492-542 (RRHQ…EEEG), and 618-655 (LLKD…STAP). S416 is modified (phosphoserine). A compositionally biased stretch (basic and acidic residues) spans 427–439 (DGKGENVTSKDES). A C2H2-type 3 zinc finger spans residues 476-499 (HPCKYCKKVFGTHTNMRRHQRRVH). S637 bears the Phosphoserine mark. Glycyl lysine isopeptide (Lys-Gly) (interchain with G-Cter in SUMO2) cross-links involve residues K645, K684, and K686. Disordered regions lie at residues 724–794 (TSSR…SPPC), 823–1075 (SGVK…SSVV), and 1088–1112 (VTFK…AGGQ). The span at 733-743 (SSPPSSPQHSP) shows a compositional bias: low complexity. S738 carries the phosphoserine modification. Residue K769 forms a Glycyl lysine isopeptide (Lys-Gly) (interchain with G-Cter in SUMO2) linkage. S776, S780, and S791 each carry phosphoserine. Polar residues predominate over residues 823 to 832 (SGVKQKSEGT). A compositionally biased stretch (basic and acidic residues) spans 846–863 (SVHKKPCDSEGKEFKENH). Glycyl lysine isopeptide (Lys-Gly) (interchain with G-Cter in SUMO2) cross-links involve residues K860 and K870. 2 stretches are compositionally biased toward polar residues: residues 891-912 (SLPT…SPDT) and 943-952 (LQTASLSSGQ). Residues 962–983 (PSSPPPCPPVLTVATPPPPLLP) show a composition bias toward pro residues. The span at 993-1009 (DASPQQCPSPFSNTTAQ) shows a compositional bias: polar residues. The span at 1010-1019 (SPLPILSPTV) shows a compositional bias: low complexity. Over residues 1020–1030 (SPSPSPIPPVE) the composition is skewed to pro residues. A compositionally biased stretch (low complexity) spans 1034-1062 (SAASPGPPTLSSSSSSSSSFPSSSCSSTS). Positions 1091 to 1106 (KQEESESEGLKPKEEA) are enriched in basic and acidic residues. C2H2-type zinc fingers lie at residues 1123–1145 (FICN…LSVH), 1151–1174 (FKCE…FLLH), and 1180–1203 (FVCS…RDLH). Residues K1136 and K1140 each participate in a glycyl lysine isopeptide (Lys-Gly) (interchain with G-Cter in SUMO2) cross-link. The span at 1218–1227 (LRPQNFTDPS) shows a compositional bias: polar residues. The tract at residues 1218–1251 (LRPQNFTDPSKANVEHMPSLPEEPLETSREEELN) is disordered. A Glycyl lysine isopeptide (Lys-Gly) (interchain with G-Cter in SUMO2) cross-link involves residue K1269. A C2H2-type 7; atypical zinc finger spans residues 1321–1343 (IRCTKCGKGVDNMPELHKHILAC). Residues 1443–1465 (HICPYCDREFTYIGSLNKHAAFS) form a C2H2-type 8; atypical zinc finger. The interval 1466–1563 (CPKKPLSPSK…KKASSSSLRN (98 aa)) is disordered. Basic residues predominate over residues 1474-1486 (SKRKVSHSSKKGG). Low complexity predominate over residues 1487 to 1498 (HASSSSSDRNSS). Residues 1528 to 1544 (GPAQASLPSSSFRSRQN) show a composition bias toward polar residues. Positions 1548–1563 (AASVKSKKASSSSLRN) are enriched in low complexity.

Belongs to the class V-like SAM-binding methyltransferase superfamily. In terms of assembly, binds to the retinoblastoma protein (RB). Interacts with GATA3.

The protein localises to the nucleus. It catalyses the reaction L-lysyl-[histone] + S-adenosyl-L-methionine = N(6)-methyl-L-lysyl-[histone] + S-adenosyl-L-homocysteine + H(+). The catalysed reaction is L-lysyl(9)-[histone H3] + 3 S-adenosyl-L-methionine = N(6),N(6),N(6)-trimethyl-L-lysyl(9)-[histone H3] + 3 S-adenosyl-L-homocysteine + 3 H(+). S-adenosyl-L-methionine-dependent histone methyltransferase that specifically methylates 'Lys-9' of histone H3. May function as a DNA-binding transcription factor. Binds to the macrophage-specific TPA-responsive element (MTE) of the HMOX1 (heme oxygenase 1) gene and may act as a transcriptional activator of this gene. The polypeptide is PR domain zinc finger protein 2 (Prdm2) (Rattus norvegicus (Rat)).